The sequence spans 878 residues: Alanine--tRNA ligase (878 aa).

Zn(2+)-binding residues include His564, His568, Cys666, and His670.

Belongs to the class-II aminoacyl-tRNA synthetase family. In terms of assembly, homotetramer. Zn(2+) is required as a cofactor.

Its subcellular location is the cytoplasm. The catalysed reaction is tRNA(Ala) + L-alanine + ATP = L-alanyl-tRNA(Ala) + AMP + diphosphate. Functionally, catalyzes the attachment of alanine to tRNA(Ala) in a two-step reaction: alanine is first activated by ATP to form Ala-AMP and then transferred to the acceptor end of tRNA(Ala). Also edits incorrectly charged Ser-tRNA(Ala) and Gly-tRNA(Ala) via its editing domain. This chain is Alanine--tRNA ligase, found in Buchnera aphidicola subsp. Acyrthosiphon pisum (strain APS) (Acyrthosiphon pisum symbiotic bacterium).